The primary structure comprises 91 residues: Small ribosomal subunit protein uS19 (91 aa).

It belongs to the universal ribosomal protein uS19 family.

In terms of biological role, protein S19 forms a complex with S13 that binds strongly to the 16S ribosomal RNA. In Cupriavidus taiwanensis (strain DSM 17343 / BCRC 17206 / CCUG 44338 / CIP 107171 / LMG 19424 / R1) (Ralstonia taiwanensis (strain LMG 19424)), this protein is Small ribosomal subunit protein uS19.